A 421-amino-acid chain; its full sequence is NADP(+)-dependent glutamate dehydrogenase (421 aa).

Substrate contacts are provided by Lys-70 and Lys-94. The Proton donor role is filled by Lys-106. Residues Thr-190 and Asn-221 each contribute to the NADP(+) site. Ser-354 is a binding site for substrate.

This sequence belongs to the Glu/Leu/Phe/Val dehydrogenases family. As to quaternary structure, homohexamer.

It catalyses the reaction L-glutamate + NADP(+) + H2O = 2-oxoglutarate + NH4(+) + NADPH + H(+). With respect to regulation, is not regulated allosterically. Activity is inhibited in the presence of high ionic strength; the inhibitory effect of KCl is slightly higher than that of NaCl. In terms of biological role, catalyzes the reversible oxidative deamination of L-glutamate to 2-oxoglutarate and ammonia, thereby playing a key role at the intersection of the carbon and nitrogen metabolic pathways. Shows a high preference for NADP(+)/NADPH as the acceptor/donor over NAD(+)/NADH. May function in vivo in the synthetic direction. Also catalyzes at very low rates the oxidative deamination of L-2-aminobutyrate, and the reductive amination of 2-oxovalerate and 2-oxobutyrate. The protein is NADP(+)-dependent glutamate dehydrogenase of Pyrobaculum calidifontis (strain DSM 21063 / JCM 11548 / VA1).